The sequence spans 450 residues: Keratin, type I cytoskeletal 25 (450 aa).

The disordered stretch occupies residues 1–25 (MSLRLPSGSRRASPRPTTGSLRLSS). Residues 1 to 78 (MSLRLPSGSR…VNEGGLLSGN (78 aa)) are head. Positions 79-114 (EKVTMQNLNDRLASYLENVRALEEANADLEQKIKGW) are coil 1A. An IF rod domain is found at 79 to 394 (EKVTMQNLND…LLIGGDDGAC (316 aa)). The linker 1 stretch occupies residues 115–136 (YEKFGPGSCRGLDHDYSRYFPI). Positions 137-228 (IEDLKNQIIA…KNHKEEMQVL (92 aa)) are coil 1B. Residues 229–251 (QCAAGGNVNVEMNAAPGVDLTVL) are linker 12. The coil 2 stretch occupies residues 252-390 (LNNMRAEYEA…ETYCLLIGGD (139 aa)). The tract at residues 391-450 (DGACKSGGYKSKDYGAGNVGNQMKDPVKAIVVKKVLEEVDQRSKILTPRLHSLEEKSQSN) is tail. Serine 442 is subject to Phosphoserine.

Belongs to the intermediate filament family. Heterodimer of a type I and a type II keratin. Heterodimer with type II keratin KRT5 leading to the formation of keratin intermediate filament (KIF) network. Interacts with KRT6A to form filaments.

The protein localises to the cytoplasm. Essential for the proper assembly of type I and type II keratin protein complexes and formation of keratin intermediate filaments in the inner root sheath (irs). Plays a role in the cytoskeleton organization. In Bos taurus (Bovine), this protein is Keratin, type I cytoskeletal 25.